A 720-amino-acid chain; its full sequence is Methionine--tRNA ligase (720 aa).

Residues 27–37 (PYANGQIHIGH) carry the 'HIGH' region motif. The Zn(2+) site is built by Cys158, Cys161, Cys171, and Cys174. A 'KMSKS' region motif is present at residues 348–352 (KMSKS). ATP is bound at residue Lys351. Positions 614–720 (DFAKVDLRIA…SGAKPGMRVK (107 aa)) constitute a tRNA-binding domain.

Belongs to the class-I aminoacyl-tRNA synthetase family. MetG type 1 subfamily. Homodimer. Requires Zn(2+) as cofactor.

The protein resides in the cytoplasm. The enzyme catalyses tRNA(Met) + L-methionine + ATP = L-methionyl-tRNA(Met) + AMP + diphosphate. Functionally, is required not only for elongation of protein synthesis but also for the initiation of all mRNA translation through initiator tRNA(fMet) aminoacylation. The chain is Methionine--tRNA ligase from Burkholderia ambifaria (strain ATCC BAA-244 / DSM 16087 / CCUG 44356 / LMG 19182 / AMMD) (Burkholderia cepacia (strain AMMD)).